A 311-amino-acid polypeptide reads, in one-letter code: Reaction center protein L chain (311 aa).

The next 3 helical transmembrane spans lie at 68 to 90, 123 to 151, and 156 to 178; these read FWGFVSVIGIIFGSYFYINETIL, GFAWQMTVLFATIAFFGWMMRQVDISMKL, and HVPIAFGVAFSAWLVLQVIRPIA. Residues His183 and His213 each contribute to the (7R,8Z)-bacteriochlorophyll b site. A helical membrane pass occupies residues 211–238; that stretch reads PFHAIGITGLFASTWLLACHGSLILSAA. Position 230 (His230) interacts with Fe cation. Position 253 (Phe253) interacts with a ubiquinone. A helical transmembrane segment spans residues 262 to 287; that stretch reads GESGVHRLGYIFAIGGILSADLCILL. His267 contributes to the Fe cation binding site.

This sequence belongs to the reaction center PufL/M/PsbA/D family. As to quaternary structure, reaction center is composed of four bacteriochlorophylls, two bacteriopheophytins, two ubiquinones, one iron, and two highly hydrophobic polypeptide chains (designated L and M).

Its subcellular location is the cell membrane. Its function is as follows. The reaction center is a membrane-bound complex that mediates the initial photochemical event in the electron transfer process of photosynthesis. This chain is Reaction center protein L chain (pufL), found in Chloroflexus aurantiacus (strain ATCC 29366 / DSM 635 / J-10-fl).